A 488-amino-acid polypeptide reads, in one-letter code: Ribulose bisphosphate carboxylase large chain (488 aa).

Substrate-binding residues include asparagine 127 and threonine 177. Lysine 179 functions as the Proton acceptor in the catalytic mechanism. Residue lysine 181 coordinates substrate. Mg(2+) contacts are provided by lysine 205, aspartate 207, and glutamate 208. Residue lysine 205 is modified to N6-carboxylysine. The active-site Proton acceptor is histidine 297. Positions 298, 330, and 382 each coordinate substrate.

This sequence belongs to the RuBisCO large chain family. Type I subfamily. In terms of assembly, heterohexadecamer of 8 large chains and 8 small chains. Requires Mg(2+) as cofactor.

Its subcellular location is the plastid. It is found in the chloroplast. It carries out the reaction 2 (2R)-3-phosphoglycerate + 2 H(+) = D-ribulose 1,5-bisphosphate + CO2 + H2O. It catalyses the reaction D-ribulose 1,5-bisphosphate + O2 = 2-phosphoglycolate + (2R)-3-phosphoglycerate + 2 H(+). Its function is as follows. RuBisCO catalyzes two reactions: the carboxylation of D-ribulose 1,5-bisphosphate, the primary event in carbon dioxide fixation, as well as the oxidative fragmentation of the pentose substrate in the photorespiration process. Both reactions occur simultaneously and in competition at the same active site. This chain is Ribulose bisphosphate carboxylase large chain, found in Gracilaria tenuistipitata var. liui (Red alga).